The following is a 272-amino-acid chain: 3-methyl-2-oxobutanoate hydroxymethyltransferase (272 aa).

Mg(2+) is bound by residues Asp-43 and Asp-82. Residues 43-44 (DS), Asp-82, and Lys-112 each bind 3-methyl-2-oxobutanoate. Glu-114 is a binding site for Mg(2+). Glu-179 functions as the Proton acceptor in the catalytic mechanism.

The protein belongs to the PanB family. Homodecamer; pentamer of dimers. The cofactor is Mg(2+).

The protein localises to the cytoplasm. The enzyme catalyses 3-methyl-2-oxobutanoate + (6R)-5,10-methylene-5,6,7,8-tetrahydrofolate + H2O = 2-dehydropantoate + (6S)-5,6,7,8-tetrahydrofolate. It functions in the pathway cofactor biosynthesis; (R)-pantothenate biosynthesis; (R)-pantoate from 3-methyl-2-oxobutanoate: step 1/2. Its function is as follows. Catalyzes the reversible reaction in which hydroxymethyl group from 5,10-methylenetetrahydrofolate is transferred onto alpha-ketoisovalerate to form ketopantoate. The polypeptide is 3-methyl-2-oxobutanoate hydroxymethyltransferase (Staphylococcus aureus (strain COL)).